A 341-amino-acid chain; its full sequence is tRNA N6-adenosine threonylcarbamoyltransferase (341 aa).

The Fe cation site is built by His111 and His115. Residues 134 to 138 (LVSGG), Asp167, Gly180, and Asn276 contribute to the substrate site. Asp304 lines the Fe cation pocket.

The protein belongs to the KAE1 / TsaD family. Fe(2+) serves as cofactor.

Its subcellular location is the cytoplasm. It carries out the reaction L-threonylcarbamoyladenylate + adenosine(37) in tRNA = N(6)-L-threonylcarbamoyladenosine(37) in tRNA + AMP + H(+). Required for the formation of a threonylcarbamoyl group on adenosine at position 37 (t(6)A37) in tRNAs that read codons beginning with adenine. Is involved in the transfer of the threonylcarbamoyl moiety of threonylcarbamoyl-AMP (TC-AMP) to the N6 group of A37, together with TsaE and TsaB. TsaD likely plays a direct catalytic role in this reaction. The protein is tRNA N6-adenosine threonylcarbamoyltransferase of Pseudomonas putida (strain W619).